A 353-amino-acid chain; its full sequence is MLQKPVQLLLWVAICLLVLLTVYVFFMLDMLWSPFWLVIKTIFIPLIISIFISYLLLPVTEWLHGKGLPRTLSILVIYVLFFGGIGWALYKGVPVLIVQLTDLSENIPMFAETYNGLLLHVHNHTDDWPDGMHHRIDKMIRQTEAFFAGTIEGAISGIRNVLDYFLIAATIPFLVFYMVKDIELMKKTVWYLTPKSWRKRGSAFLRDVDDSLGDYIRGQLLVCLILGVIAGISFWVFGLPYPLILGLISGVTNVIPYFGPFIGAVPALLIAMTISVKAVLVVVITVFILQFMEGNILSPFIVGRSLKMHPVVIMLALLAGGELAGIVGMILAVPATAVLKVMMIHFLRMRTEH.

8 consecutive transmembrane segments (helical) span residues 8-28 (LLLW…FFML), 37-57 (LVIK…YLLL), 77-97 (IYVL…PVLI), 165-185 (FLIA…IELM), 220-240 (LLVC…FGLP), 243-263 (LILG…PFIG), 269-289 (LIAM…VFIL), and 311-331 (VVIM…GMIL).

Belongs to the autoinducer-2 exporter (AI-2E) (TC 2.A.86) family.

The protein resides in the cell membrane. This chain is Putative transport protein YrrI (yrrI), found in Bacillus subtilis (strain 168).